The primary structure comprises 775 residues: Ribonucleoside-diphosphate reductase large subunit (775 aa).

Substrate is bound by residues threonine 200, 215–216, glycine 246, 427–431, and 606–610; these read SC, NLCTE, and PTVSS. Cysteines 216 and 444 form a disulfide. The active-site Proton acceptor is asparagine 427. Catalysis depends on cysteine 429, which acts as the Cysteine radical intermediate. Glutamate 431 functions as the Proton acceptor in the catalytic mechanism.

It belongs to the ribonucleoside diphosphate reductase large chain family. Heterotetramer composed of a homodimer of the large subunit (R1) and a homodimer of the small subunit (R2). Larger multisubunit protein complex are also active, composed of (R1)n(R2)n.

The enzyme catalyses a 2'-deoxyribonucleoside 5'-diphosphate + [thioredoxin]-disulfide + H2O = a ribonucleoside 5'-diphosphate + [thioredoxin]-dithiol. Ribonucleoside-diphosphate reductase holoenzyme provides the precursors necessary for viral DNA synthesis. Allows virus growth in non-dividing cells, as well as reactivation from latency in infected hosts. Catalyzes the biosynthesis of deoxyribonucleotides from the corresponding ribonucleotides. This Homo sapiens (Human) protein is Ribonucleoside-diphosphate reductase large subunit.